A 460-amino-acid polypeptide reads, in one-letter code: Equilibrative nucleoside transporter 1 (460 aa).

Topologically, residues 1-12 (MTTSHQPQDRYK) are cytoplasmic. Residues 13-29 (AVWLIFFVLGLGTLLPW) form a helical membrane-spanning segment. Residues 30–82 (NFFMTATKYFTNRLDVSQNVSSDTDQSCESTKALADPTVALPARSSLSAIFNN) lie on the Extracellular side of the membrane. N-linked (GlcNAc...) asparagine glycosylation occurs at asparagine 48. The chain crosses the membrane as a helical span at residues 83-107 (VMTLCAMLPLLVFTCLNSFLHQRIS). The Cytoplasmic portion of the chain corresponds to 108 to 111 (QSVR). The chain crosses the membrane as a helical span at residues 112–130 (ILGSLLAILLVFLVTAALV). At 131 to 138 (KVEMDALI) the chain is on the extracellular side. Residues 139–157 (FFVITMIKIVLINSFGAIL) traverse the membrane as a helical segment. Residues 158–174 (QASLFGLAGVLPANYTA) lie on the Cytoplasmic side of the membrane. Residues 175 to 199 (PIMSGQGLAGFFTSVAMICAIASGS) traverse the membrane as a helical segment. At 200–206 (ELSESAF) the chain is on the extracellular side. A helical transmembrane segment spans residues 207–227 (GYFITACAVVILAILCYLALP). Topologically, residues 228–291 (RTEFYRHYLQ…IKAILKSICV (64 aa)) are cytoplasmic. The residue at position 254 (serine 254) is a Phosphoserine. Positions 255 to 266 (KGEEPKGRREES) are enriched in basic and acidic residues. A disordered region spans residues 255 to 277 (KGEEPKGRREESGVPGPNSPPTN). Serine 273 carries the post-translational modification Phosphoserine. Residues 292–311 (PALSVCFIFTVTIGLFPAVT) form a helical membrane-spanning segment. The Extracellular portion of the chain corresponds to 312-323 (AEVESSIAGTSP). The chain crosses the membrane as a helical span at residues 324-342 (WKSYFIPVACFLNFNVFDW). At 343–359 (LGRSLTAVCMWPGQDSR) the chain is on the cytoplasmic side. Residues 360 to 378 (WLPVLVASRIVFIPLLMLC) form a helical membrane-spanning segment. The Extracellular portion of the chain corresponds to 379–397 (NVKARHCGAQRHHFVFKHD). The helical transmembrane segment at 398–417 (AWFIAFMAAFAFSNGYLASL) threads the bilayer. The Cytoplasmic segment spans residues 418 to 435 (CMCFGPKKVKPAEAETAG). A helical transmembrane segment spans residues 436–456 (NIMSFFLCLGLALGAVLSFLL). Over 457 to 460 (RALV) the chain is Extracellular.

This sequence belongs to the SLC29A/ENT transporter (TC 2.A.57) family. In terms of assembly, identified in a complex with STOM. Glycosylated. In terms of tissue distribution, highly expressed in heart, spleen, lung, liver and testis. Lower level of expression in brain and kidney. Expressed in adipose tissues, brown adipocytes expressing significantly higher amounts than white adipocytes. Expressed in seminiferous tubules.

It is found in the basolateral cell membrane. The protein resides in the apical cell membrane. Its subcellular location is the cell membrane. It catalyses the reaction adenosine(in) = adenosine(out). It carries out the reaction guanosine(in) = guanosine(out). The catalysed reaction is inosine(in) = inosine(out). The enzyme catalyses uridine(out) = uridine(in). It catalyses the reaction thymidine(in) = thymidine(out). It carries out the reaction cytidine(in) = cytidine(out). The catalysed reaction is adenine(out) = adenine(in). The enzyme catalyses guanine(out) = guanine(in). It catalyses the reaction thymine(out) = thymine(in). It carries out the reaction uracil(in) = uracil(out). The catalysed reaction is hypoxanthine(out) = hypoxanthine(in). With respect to regulation, transporter activity is sensitive to low concentrations of the inhibitor nitrobenzylmercaptopurine riboside (NBMPR). Uniporter involved in the facilitative transport of nucleosides and nucleobases, and contributes to maintaining their cellular homeostasis. Functions as a Na(+)-independent transporter. Involved in the transport of nucleosides such as adenosine, guanosine, inosine, uridine, thymidine and cytidine. Also transports purine (hypoxanthine, adenine, guanine) and pyrimidine nucleobases (thymine, uracil). Mediates basolateral nucleoside uptake into Sertoli cells, thereby regulating the transport of nucleosides in testis across the blood-testis-barrier. Regulates inosine levels in brown adipocytes tissues (BAT) and extracellular inosine levels, which controls BAT-dependent energy expenditure. This Mus musculus (Mouse) protein is Equilibrative nucleoside transporter 1.